Here is a 362-residue protein sequence, read N- to C-terminus: 3-dehydroquinate synthase (362 aa).

NAD(+) is bound by residues 71–76 (DGEQYK), 105–109 (GVIGD), 129–130 (TT), K142, K151, and 169–172 (CLKT). The Zn(2+) site is built by E184, H247, and H264.

The protein belongs to the sugar phosphate cyclases superfamily. Dehydroquinate synthase family. Requires Co(2+) as cofactor. It depends on Zn(2+) as a cofactor. NAD(+) serves as cofactor.

The protein resides in the cytoplasm. It carries out the reaction 7-phospho-2-dehydro-3-deoxy-D-arabino-heptonate = 3-dehydroquinate + phosphate. The protein operates within metabolic intermediate biosynthesis; chorismate biosynthesis; chorismate from D-erythrose 4-phosphate and phosphoenolpyruvate: step 2/7. Catalyzes the conversion of 3-deoxy-D-arabino-heptulosonate 7-phosphate (DAHP) to dehydroquinate (DHQ). The sequence is that of 3-dehydroquinate synthase from Salmonella agona (strain SL483).